The primary structure comprises 370 residues: CST complex subunit STN1 (370 aa).

Positions 1 to 187 are interaction with CTC1; sequence MESNSSQCED…KVYDQPFHSP (187 aa). The OB DNA-binding region spans 57–157; it reads VDILGTVIGV…EIHATTYYKV (101 aa). 2 winged helix-turn-helix (wHTH) regions span residues 193-297 and 298-370; these read EALS…YVTR and EDKE…YTAF.

It belongs to the STN1 family. As to quaternary structure, component of the CST complex, composed of TEN1/C17orf106, CTC1/C17orf68 and STN1; in the complex interacts directly with TEN1 and CTC1. Interacts with ACD/TPP1, POT1 and POLA1.

The protein resides in the nucleus. It localises to the chromosome. It is found in the telomere. Its function is as follows. Component of the CST complex proposed to act as a specialized replication factor promoting DNA replication under conditions of replication stress or natural replication barriers such as the telomere duplex. The CST complex binds single-stranded DNA with high affinity in a sequence-independent manner, while isolated subunits bind DNA with low affinity by themselves. Initially the CST complex has been proposed to protect telomeres from DNA degradation. However, the CST complex has been shown to be involved in several aspects of telomere replication. The CST complex inhibits telomerase and is involved in telomere length homeostasis; it is proposed to bind to newly telomerase-synthesized 3' overhangs and to terminate telomerase action implicating the association with the ACD:POT1 complex thus interfering with its telomerase stimulation activity. The CST complex is also proposed to be involved in fill-in synthesis of the telomeric C-strand probably implicating recruitment and activation of DNA polymerase alpha. The CST complex facilitates recovery from many forms of exogenous DNA damage; seems to be involved in the re-initiation of DNA replication at repaired forks and/or dormant origins. Required for efficicient replication of the duplex region of the telomere. Promotes efficient replication of lagging-strand telomeres. Promotes general replication start following replication-fork stalling implicating new origin firing. May be in involved in C-strand fill-in during late S/G2 phase independent of its role in telomere duplex replication. This is CST complex subunit STN1 from Bos taurus (Bovine).